We begin with the raw amino-acid sequence, 139 residues long: I-Kappa-B like protein N1 (139 aa).

3 ANK repeats span residues 16-48 (NGEN…QYLL), 54-87 (EGRK…DVNG), and 92-122 (TGDT…NINA).

It belongs to the polydnaviridae I-Kappa-B-like protein family.

Functionally, suppresses the host immune response through NF-kappa-B inactivation. Possesses ankyrin repeat domain required for NF-kappa-B binding but lack the regulatory regions required for dissociation from NF-kappa-B and degradation. Therefore, prevents host NF-kappa-B release and subsequent activation. The polypeptide is I-Kappa-B like protein N1 (N2) (Microplitis demolitor bracovirus (isolate Webb) (MdBV)).